A 1224-amino-acid polypeptide reads, in one-letter code: uncharacterized protein (1224 aa).

6 disordered regions span residues 1 to 67, 111 to 151, 193 to 270, 316 to 416, 430 to 957, and 1078 to 1167; these read MNQD…SSSI, QQSH…PPPL, QTEL…DPNI, DYNN…TVKK, SDSG…QEEK, and SFLP…TSHV. Residues 10–48 are compositionally biased toward low complexity; sequence SFHSNNNSNSNHHHSYNNSINSGSSSSGSNNSSNNNSFN. Positions 49-58 are enriched in acidic residues; sequence DEIEGGEIQE. 3 stretches are compositionally biased toward low complexity: residues 126-140, 193-212, and 228-241; these read SSSS…SSSS, QTEL…SSPP, and SAPT…SVSS. The span at 242 to 255 shows a compositional bias: polar residues; that stretch reads LTQPQKPKSVQYSQ. The segment covering 260–270 has biased composition (basic and acidic residues); it reads EIREEKVDPNI. Positions 316–338 are enriched in low complexity; sequence DYNNSNSNNSNNNNNNNNSITEN. A compositionally biased stretch (polar residues) spans 341–353; it reads DKMINNQPSSTNS. Composition is skewed to low complexity over residues 379 to 413 and 430 to 450; these read TTTT…TTPT and SDSG…TSTP. Composition is skewed to basic and acidic residues over residues 451–585 and 630–646; these read KSKD…DKKK and EIDK…KVES. A compositionally biased stretch (low complexity) spans 662 to 719; it reads TTTTTTSTSSSSSLPSLSSSSSSLPLPSSSSSSSSSSSSSSSSSSSSSSSSSSSTTST. Residues 727–750 show a composition bias toward pro residues; the sequence is PPPPPQQPPPPPPQQPPPPPPPIN. Over residues 755-892 the composition is skewed to basic and acidic residues; sequence SEHDKKIIEK…SDRDRDRKDS (138 aa). Positions 893 to 933 are enriched in low complexity; that stretch reads NSNNNSNNNNNNNNNNNNNNNNNNNNKKDNNNNNNNNNNNN. Residues 948–957 show a composition bias toward basic and acidic residues; it reads TPKKTKQEEK. The stretch at 950–991 forms a coiled coil; the sequence is KKTKQEEKLIRSQIDQIKEDAKDLKKLAKELQSKNQNECLEM. 2 stretches are compositionally biased toward low complexity: residues 1078-1108 and 1114-1165; these read SFLP…TAPL and NPSE…PNTS.

This is an uncharacterized protein from Dictyostelium discoideum (Social amoeba).